The following is a 298-amino-acid chain: Phospholipase A1 (298 aa).

Cys-4 and Cys-87 are disulfide-bonded. 2 N-linked (GlcNAc...) asparagine glycosylation sites follow: Asn-88 and Asn-122. The active-site Nucleophile is the Ser-134. Asp-162 functions as the Charge relay system in the catalytic mechanism. Cystine bridges form between Cys-173–Cys-178 and Cys-216–Cys-225. His-227 (charge relay system) is an active-site residue. Cystine bridges form between Cys-242/Cys-266, Cys-243/Cys-291, and Cys-259/Cys-264.

It belongs to the AB hydrolase superfamily. Lipase family. In terms of tissue distribution, expressed by the venom gland.

The protein localises to the secreted. It carries out the reaction a 1,2-diacyl-sn-glycero-3-phosphocholine + H2O = a 2-acyl-sn-glycero-3-phosphocholine + a fatty acid + H(+). Catalyzes the hydrolysis of phosphatidylcholine with phospholipase A1 activity. May act as an allergen and induce hemolytic activity. The sequence is that of Phospholipase A1 from Vespula squamosa (Southern yellow jacket).